A 234-amino-acid chain; its full sequence is Lipoprotein-releasing system ATP-binding protein LolD (234 aa).

Positions Leu7 to Ala233 constitute an ABC transporter domain. Gly43–Ser50 is a binding site for ATP.

Belongs to the ABC transporter superfamily. Lipoprotein translocase (TC 3.A.1.125) family. As to quaternary structure, the complex is composed of two ATP-binding proteins (LolD) and two transmembrane proteins (LolC and LolE).

It localises to the cell inner membrane. Part of the ABC transporter complex LolCDE involved in the translocation of mature outer membrane-directed lipoproteins, from the inner membrane to the periplasmic chaperone, LolA. Responsible for the formation of the LolA-lipoprotein complex in an ATP-dependent manner. This chain is Lipoprotein-releasing system ATP-binding protein LolD, found in Yersinia pestis bv. Antiqua (strain Antiqua).